We begin with the raw amino-acid sequence, 788 residues long: Ribonucleoside-diphosphate reductase large subunit (788 aa).

Residues 7-98 enclose the ATP-cone domain; sequence TYVVKRDGRK…VSNLHKKTNK (92 aa). ATP contacts are provided by residues 11-12, 17-23, Thr-59, and Asp-63; these read KR and EDVHFDK. The GDP site is built by Ser-208 and Ser-223. Cys-224 and Cys-450 are disulfide-bonded. Residues 232–234, Lys-249, Arg-262, and 269–270 contribute to the dTTP site; these read DSI and AG. A GDP-binding site is contributed by Asn-433. The Proton acceptor role is filled by Asn-433. Cys-435 serves as the catalytic Cysteine radical intermediate. GDP is bound by residues Glu-437 and 610-613; that span reads TAST. Glu-437 acts as the Proton acceptor in catalysis.

It belongs to the ribonucleoside diphosphate reductase large chain family. Heterodimer of a large and a small subunit.

It carries out the reaction a 2'-deoxyribonucleoside 5'-diphosphate + [thioredoxin]-disulfide + H2O = a ribonucleoside 5'-diphosphate + [thioredoxin]-dithiol. Under complex allosteric control mediated by deoxynucleoside triphosphates and ATP binding to separate specificity and activation sites on the large subunit. The type of nucleotide bound at the specificity site determines substrate preference. It seems probable that ATP makes the enzyme reduce CDP and UDP, dGTP favors ADP reduction and dTTP favors GDP reduction. Stimulated by ATP and inhibited by dATP binding to the activity site. Its function is as follows. Provides the precursors necessary for DNA synthesis. Catalyzes the biosynthesis of deoxyribonucleotides from the corresponding ribonucleotides. This Caenorhabditis elegans protein is Ribonucleoside-diphosphate reductase large subunit (rnr-1).